The following is a 1235-amino-acid chain: Major DNA-binding protein (1235 aa).

The segment at 536–584 (GGLDGKGDDGVPGGGAGGGGGRDVSGGPSDGLGGGRGGGGGGDSGGMMG) is disordered. The span at 545-584 (GVPGGGAGGGGGRDVSGGPSDGLGGGRGGGGGGDSGGMMG) shows a compositional bias: gly residues. The short motif at 846–847 (FW) is the Required for filament formation element. The span at 1214–1226 (GVGGSSGGGGGSG) shows a compositional bias: gly residues. Residues 1214–1235 (GVGGSSGGGGGSGLLPAKRSRL) form a disordered region. The interval 1232–1235 (RSRL) is required for nuclear localization.

The protein belongs to the herpesviridae major DNA-binding protein family. In terms of assembly, homooligomers. Forms double-helical filaments necessary for the formation of replication compartments within the host nucleus. Interacts with the origin-binding protein. Interacts with the helicase primase complex; this interaction stimulates primer synthesis activity of the helicase-primase complex. Interacts with the DNA polymerase. Interacts with the alkaline exonuclease; this interaction increases its nuclease processivity.

The protein localises to the host nucleus. Its function is as follows. Plays several crucial roles in viral infection. Participates in the opening of the viral DNA origin to initiate replication by interacting with the origin-binding protein. May disrupt loops, hairpins and other secondary structures present on ssDNA to reduce and eliminate pausing of viral DNA polymerase at specific sites during elongation. Promotes viral DNA recombination by performing strand-transfer, characterized by the ability to transfer a DNA strand from a linear duplex to a complementary single-stranded DNA circle. Can also catalyze the renaturation of complementary single strands. Additionally, reorganizes the host cell nucleus, leading to the formation of prereplicative sites and replication compartments. This process is driven by the protein which can form double-helical filaments in the absence of DNA. In Homo sapiens (Human), this protein is Major DNA-binding protein.